Consider the following 556-residue polypeptide: (S)-N-methylcanadine 1-hydroxylase CYP82Y1 (556 aa).

The helical transmembrane segment at 18–38 (TAVGTLILAFLLTLSPVIIYY) threads the bilayer. Position 500 (Cys-500) interacts with heme.

This sequence belongs to the cytochrome P450 family. Heme serves as cofactor. As to expression, highly expressed in capsules. Expressed is stems.

The protein localises to the membrane. The enzyme catalyses (S)-cis-N-methylcanadine + reduced [NADPH--hemoprotein reductase] + O2 = (S)-1-hydroxy-N-methylcanadine + oxidized [NADPH--hemoprotein reductase] + H2O + H(+). The protein operates within alkaloid biosynthesis. Functionally, cytochrome P450 involved in the biosynthesis of the benzylisoquinoline alkaloid noscapine. Converts (S)-N-methylcanadine to (S)-1-hydroxy-N-methylcanadine. This Papaver somniferum (Opium poppy) protein is (S)-N-methylcanadine 1-hydroxylase CYP82Y1.